We begin with the raw amino-acid sequence, 88 residues long: MMSFQKIYSPTQLANAMKLVRQQNGWTQSELAKKIGIKQATISNFENNPDNTTLTTFFKILQSLELSMTLCDAKNASPESTEQQNLEW.

One can recognise an HTH cro/C1-type domain in the interval 17-71 (MKLVRQQNGWTQSELAKKIGIKQATISNFENNPDNTTLTTFFKILQSLELSMTLC). The segment at residues 21 to 47 (RQQNGWTQSELAKKIGIKQATISNFEN) is a DNA-binding region (H-T-H motif).

As to quaternary structure, homodimer. Binds operator DNA sites in the absence of HipA, inducing a 70 degree bend in consecutive operators and deforming DNA between the operators so that HipB dimers bind on opposite faces of the DNA. Forms a HipA(2)HipB(2) heterotetramer which can interact with a single operator site on DNA, inducing a 70 degree bend. When 2 operators are present each HipB dimer contacts 1 HipA molecule, which are brought together by the DNA bend and dimerize, blocking the HipA active site and inactivating its toxic activity. HipA-HipB-induced bending also distorts the -35 and -10 boxes of the promoter and probably prevents sigma-factor binding, and additionally bound HipB and HipA block RNA polymerase access to the -35 box, thus repressing the operon. This complex also blocks the toxic activity of HipA. Mutations present in allele hipA7 (G22S and D291A) decrease the affinity of HipA for HipB. Degraded by Lon protease in vivo; half-life is 17 minutes in wild-type cells and over 200 minutes in a lon deletion strain. In vitro degradation by Lon is Mg(2+)-ATP-dependent.

Degraded by Lon protease; degradation is inhibited in a HipA-HipB complex and when bound to the operator consensus sequence dsDNA. Its function is as follows. Antitoxin component of a type II toxin-antitoxin (TA) system. Neutralizes the toxic effect of cognate toxin HipA. Also neutralizes the toxic effect of non-cognate toxin YjjJ. Binds to operator sites with the consensus sequence 5-'TATCCN(8)GGATA-3' to repress the hipBA operon promoter; binding of HipB(2) to DNA induces a 70 degree bend. This forces HipA dimerization, which blocks HipA's active site and thus its toxic action. May play a role in biofilm formation. The protein is Antitoxin HipB (hipB) of Escherichia coli (strain K12).